The primary structure comprises 419 residues: 2-amino-3-ketobutyrate coenzyme A ligase, mitochondrial (419 aa).

Residues Met1 to Gln21 constitute a mitochondrion transit peptide. An N6-acetyllysine; alternate modification is found at Lys45. At Lys45 the chain carries N6-succinyllysine; alternate. Cys134 to Phe135 lines the pyridoxal 5'-phosphate pocket. His159 serves as a coordination point for substrate. The residue at position 187 (Lys187) is an N6-acetyllysine; alternate. Residue Lys187 is modified to N6-succinyllysine; alternate. Pyridoxal 5'-phosphate-binding positions include Ser206, Asp231–His234, Thr262–Lys265, and Ser295–Asn296. Lys265 carries the N6-(pyridoxal phosphate)lysine modification. Lys326 and Lys368 each carry N6-succinyllysine. Position 383 is an N6-acetyllysine; alternate (Lys383). Residue Lys383 is modified to N6-succinyllysine; alternate. Residue Arg389 coordinates substrate.

Belongs to the class-II pyridoxal-phosphate-dependent aminotransferase family. It depends on pyridoxal 5'-phosphate as a cofactor.

Its subcellular location is the mitochondrion. It is found in the nucleus. The enzyme catalyses glycine + acetyl-CoA = (2S)-2-amino-3-oxobutanoate + CoA. The protein operates within amino-acid degradation; L-threonine degradation via oxydo-reductase pathway; glycine from L-threonine: step 2/2. Pyridoxal phosphate (PLP) dependent enzyme, which catalyzes the cleavage of 2-amino-3-oxobutanoate to glycine and acetyl-CoA. Catalyzes the second reaction step on the main metabolic degradation pathway for L-threonine. The polypeptide is 2-amino-3-ketobutyrate coenzyme A ligase, mitochondrial (GCAT) (Bos taurus (Bovine)).